Here is a 260-residue protein sequence, read N- to C-terminus: Ava biosynthesis cluster protein M (260 aa).

The signal sequence occupies residues 1 to 15 (MKVLVLGLCRTGTSS).

This sequence belongs to the cytochrome P450 family.

The protein operates within secondary metabolite biosynthesis. Functionally, part of the cluster that mediates the biosynthesis of a highly modified cyclo-arginine-tryptophan dipeptide (cRW). The first step of the pathway is perfornmed by the arginine-containing cyclodipeptide synthase (RCPDS) avaA that acts as the scaffold-generating enzyme and is responsible for formation of the cyclo-Arg-Trp (cRW) diketopiperazine. AvaB then acts as a multifunctional flavoenzyme that is responsible for generating the cyclo-Arg-formylkynurenine DKP, which can be deformylated by avaC. AvaB then further catalyzes an additional N-oxidation followed by cyclization and dehydration. The next step is an N-acetylation of the guanidine group catalyzed by the arginine N-acetyltransferase avaD. The roles of the additional enzymes identified within the ava cluster still have to be determined. In Aspergillus versicolor, this protein is Ava biosynthesis cluster protein M.